Consider the following 80-residue polypeptide: MLPATLLRXSGLGRVVRQARAYXEAAAAPXSAAGPGXMSFTFASPTQVFFNGANVRQVDVPTQTGAFGILASHVPTLQVL.

A mitochondrion-targeting transit peptide spans 1-22 (MLPATLLRXSGLGRVVRQARAY).

The protein belongs to the ATPase epsilon chain family. As to quaternary structure, component of the ATP synthase complex composed at least of ATP5F1A/subunit alpha, ATP5F1B/subunit beta, ATP5MC1/subunit c (homooctomer), MT-ATP6/subunit a, MT-ATP8/subunit 8, ATP5ME/subunit e, ATP5MF/subunit f, ATP5MG/subunit g, ATP5MK/subunit k, ATP5MJ/subunit j, ATP5F1C/subunit gamma, ATP5F1D/subunit delta, ATP5F1E/subunit epsilon, ATP5PF/subunit F6, ATP5PB/subunit b, ATP5PD/subunit d, ATP5PO/subunit OSCP. ATP synthase complex consists of a soluble F(1) head domain (subunits alpha(3) and beta(3)) - the catalytic core - and a membrane F(0) domain - the membrane proton channel (subunits c, a, 8, e, f, g, k and j). These two domains are linked by a central stalk (subunits gamma, delta, and epsilon) rotating inside the F1 region and a stationary peripheral stalk (subunits F6, b, d, and OSCP). Component of a complex composed at least by ATPIF1, ATP5F1A, ATP5F1B, ATP5F1C AND ATP5F1E.

The protein resides in the mitochondrion. It is found in the mitochondrion inner membrane. Its function is as follows. Subunit delta, of the mitochondrial membrane ATP synthase complex (F(1)F(0) ATP synthase or Complex V) that produces ATP from ADP in the presence of a proton gradient across the membrane which is generated by electron transport complexes of the respiratory chain. ATP synthase complex consist of a soluble F(1) head domain - the catalytic core - and a membrane F(1) domain - the membrane proton channel. These two domains are linked by a central stalk rotating inside the F(1) region and a stationary peripheral stalk. During catalysis, ATP synthesis in the catalytic domain of F(1) is coupled via a rotary mechanism of the central stalk subunits to proton translocation. In vivo, can only synthesize ATP although its ATP hydrolase activity can be activated artificially in vitro. With the central stalk subunit gamma, is essential for the biogenesis of F(1) catalytic part of the ATP synthase complex namely in the formation of F1 assembly intermediate. The chain is ATP synthase F(1) complex subunit delta, mitochondrial from Sus scrofa (Pig).